The sequence spans 457 residues: Acetylcholine receptor subunit alpha (457 aa).

The N-terminal stretch at 1-20 (MELTAVLLLLGLCSAGTVLG) is a signal peptide. At 21-230 (SEHETRLVAK…ITYHFVMQRL (210 aa)) the chain is on the extracellular side. Cystine bridges form between cysteine 148-cysteine 162 and cysteine 212-cysteine 213. Asparagine 161 carries N-linked (GlcNAc...) asparagine glycosylation. The next 3 membrane-spanning stretches (helical) occupy residues 231–255 (PLYF…VFYL), 263–281 (MTLS…LVIV), and 297–316 (YMLF…VIVI). Residues 317-428 (NTHHRSPSTH…WKYVAMVMDH (112 aa)) are Cytoplasmic-facing. The chain crosses the membrane as a helical span at residues 429-447 (ILLGVFMLVCLIGTLAVFA).

It belongs to the ligand-gated ion channel (TC 1.A.9) family. Acetylcholine receptor (TC 1.A.9.1) subfamily. Alpha-1/CHRNA1 sub-subfamily. In terms of assembly, one of the alpha chains that assemble within the acetylcholine receptor, a pentamer of two alpha chains, a beta, a delta, and a gamma (in immature muscle) or epsilon (in mature muscle) chains. The muscle heteropentamer composed of alpha-1, beta-1, delta, epsilon subunits interacts with the alpha-conotoxin ImII.

It is found in the postsynaptic cell membrane. The protein resides in the cell membrane. It catalyses the reaction K(+)(in) = K(+)(out). The enzyme catalyses Na(+)(in) = Na(+)(out). Upon acetylcholine binding, the AChR responds by an extensive change in conformation that affects all subunits and leads to opening of an ion-conducting channel across the plasma membrane. The polypeptide is Acetylcholine receptor subunit alpha (Chrna1) (Rattus norvegicus (Rat)).